The following is a 220-amino-acid chain: Casparian strip membrane protein 4 (220 aa).

Residues 1–39 (MDSRREVEESSTAPILESKRTRSNGKGKSIDGDHSPPHA) are disordered. The Cytoplasmic portion of the chain corresponds to 1 to 60 (MDSRREVEESSTAPILESKRTRSNGKGKSIDGDHSPPHAATVVTTKATPLQKGGMKKGIA). A helical transmembrane segment spans residues 61-81 (ILDFILRLGAIGAALGAAVIM). The Extracellular segment spans residues 82-108 (GTNEQILPFFTQFLQFHAQWDDFPMFK). The chain crosses the membrane as a helical span at residues 109 to 129 (FFVVANGAAAGFLILSLPFSI). Topologically, residues 130–141 (VCIVRPLAAGPR) are cytoplasmic. A helical transmembrane segment spans residues 142 to 162 (FLLVIVDLVLMALVVAAASSA). Residues 163–194 (AAVVYLAHNGSQDANWNAICQQFTDFCQGSSL) are Extracellular-facing. A glycan (N-linked (GlcNAc...) asparagine) is linked at Asn171. A helical transmembrane segment spans residues 195–215 (AVVASFVASVFLACLVVVSSV). The Cytoplasmic segment spans residues 216 to 220 (ALKRT).

The protein belongs to the Casparian strip membrane proteins (CASP) family. As to quaternary structure, homodimer and heterodimers.

It localises to the cell membrane. In terms of biological role, regulates membrane-cell wall junctions and localized cell wall deposition. Required for establishment of the Casparian strip membrane domain (CSD) and the subsequent formation of Casparian strips, a cell wall modification of the root endodermis that determines an apoplastic barrier between the intraorganismal apoplasm and the extraorganismal apoplasm and prevents lateral diffusion. The polypeptide is Casparian strip membrane protein 4 (Medicago truncatula (Barrel medic)).